A 336-amino-acid chain; its full sequence is Fructose-1,6-bisphosphatase class 1 (336 aa).

Glu90, Asp112, Leu114, and Asp115 together coordinate Mg(2+). Substrate-binding positions include 115–118, Asn211, and Lys277; that span reads DGSS. Residue Glu283 participates in Mg(2+) binding.

This sequence belongs to the FBPase class 1 family. Homotetramer. Mg(2+) is required as a cofactor.

It is found in the cytoplasm. It catalyses the reaction beta-D-fructose 1,6-bisphosphate + H2O = beta-D-fructose 6-phosphate + phosphate. It participates in carbohydrate biosynthesis; gluconeogenesis. In Pseudomonas fluorescens (strain ATCC BAA-477 / NRRL B-23932 / Pf-5), this protein is Fructose-1,6-bisphosphatase class 1.